Reading from the N-terminus, the 309-residue chain is Mitochondrial import receptor subunit TOM34 (309 aa).

Phosphoserine is present on Ser8. 3 TPR repeats span residues 9-42 (VEQL…LQAR), 51-84 (SVLY…VPFS), and 85-118 (IKPL…DNSV). The segment at 158–189 (WNSLPSDNHKETAKTKSKEATATKSRVPSAGD) is disordered. Ser160 carries the phosphoserine modification. Residues 164–178 (DNHKETAKTKSKEAT) are compositionally biased toward basic and acidic residues. Ser186 is subject to Phosphoserine. 3 TPR repeats span residues 193 to 226 (AKAL…SSLE), 227 to 260 (SATY…DGKN), and 261 to 294 (VKAF…EPRN). Lys197 is covalently cross-linked (Glycyl lysine isopeptide (Lys-Gly) (interchain with G-Cter in SUMO2)).

This sequence belongs to the Tom34 family. In terms of assembly, interacts with HSP90A, VCP, ATP6V1D, KIAA0665, AMPK, and DMAP1 through its TPR repeat. In terms of tissue distribution, isoform 1 is ubiquitously expressed while isoform 2 is expressed only in mature testicular germ cells. Isoform 1 is expressed in all testicular cells. Isoform 2 is highly expressed in early to late pachytene cells but expression is significantly decreased in round spermatid cells.

The protein localises to the cytoplasm. It localises to the mitochondrion outer membrane. Plays a role in the import of cytosolically synthesized preproteins into mitochondria. Binds the mature portion of precursor proteins. Interacts with cellular components, and possesses weak ATPase activity. May be a chaperone-like protein that helps to keep newly synthesized precursors in an unfolded import compatible state. The sequence is that of Mitochondrial import receptor subunit TOM34 (Tomm34) from Mus musculus (Mouse).